A 346-amino-acid polypeptide reads, in one-letter code: MTTVLAIETSCDETAVAIVNNRQVCSSIIASQIPVHQQYGGVVPEVASRAHLETINDAIAQAMDQAQLGWDKIDGIAATCAPGLVGALLVGLTAAKTLAILHNKPFLGVHHLEGHIYATYLSEPTLDPPFLSLLVSGGHTSLIYVKECGRYESLGETRDDAAGEAFDKVARLLKLGYPGGPVIDKLAQTGNSQAFALPEGKVSLAGGGYHPYDGSFSGLKTAVLRLVQQLERDGDPLPIEDISASFQATVAKALTKRAIACALDYGLDTIAVGGGVAANSGLRQHLQAAATANNLRVLFPPLKFCTDNAAMIACAAADHLSRGHLSPITLGVESRLSLSQVMKLYQ.

Fe cation is bound by residues His-111 and His-115. Substrate is bound by residues 134–138 (LVSGG), Asp-167, Gly-180, Asp-184, and Asn-279. Asp-307 is a Fe cation binding site.

It belongs to the KAE1 / TsaD family. Fe(2+) serves as cofactor.

It localises to the cytoplasm. It carries out the reaction L-threonylcarbamoyladenylate + adenosine(37) in tRNA = N(6)-L-threonylcarbamoyladenosine(37) in tRNA + AMP + H(+). Its function is as follows. Required for the formation of a threonylcarbamoyl group on adenosine at position 37 (t(6)A37) in tRNAs that read codons beginning with adenine. Is involved in the transfer of the threonylcarbamoyl moiety of threonylcarbamoyl-AMP (TC-AMP) to the N6 group of A37, together with TsaE and TsaB. TsaD likely plays a direct catalytic role in this reaction. This Trichormus variabilis (strain ATCC 29413 / PCC 7937) (Anabaena variabilis) protein is tRNA N6-adenosine threonylcarbamoyltransferase.